We begin with the raw amino-acid sequence, 287 residues long: HTH-type transcriptional regulator MurR (287 aa).

The HTH rpiR-type domain occupies 1 to 77; that stretch reads MLYLAKMRNA…MALIEEHSVS (77 aa). The H-T-H motif DNA-binding region spans 37 to 56; the sequence is SRNMAKQLEISQSSIVKFAQ. Residues 128–268 enclose the SIS domain; sequence VINLISKAPL…FVGMVQLNDV (141 aa).

Homotetramer.

The protein operates within amino-sugar metabolism; N-acetylmuramate degradation [regulation]. Functionally, represses the expression of the murPQ operon involved in the uptake and degradation of N-acetylmuramic acid (MurNAc). Binds to two adjacent inverted repeats within the operator region. MurNAc 6-phosphate, the substrate of MurQ, is the specific inducer that weakens binding of MurR to the operator. The protein is HTH-type transcriptional regulator MurR of Salmonella arizonae (strain ATCC BAA-731 / CDC346-86 / RSK2980).